Here is an 860-residue protein sequence, read N- to C-terminus: MATNGHFASIGNSASDTTAYEHGVQVIDENKEFKNPNLSQYLSLENVTPSGFNYHLISVFGSQSTGKSTLLNHLFGTHFSVMSELERRQTTKGIWMSKNKNESSSMASNILVMDVEGTDGRERGEDQDFERKSALFALATSEVLIVNIWEHQVGLYQGANMGLLKTVFEVNLQLFLKDKNTTHRSLLFFVIRDYSGMTPLQNLQKTLMEDMARLWDSISKPGGLENSNVHDYFDFQFYGLPHKGYQPEKFVEETQKLSLRFCDGQRDPNLDARKGEFSDGGVFLPEYHRRIPADGFSRYAEGIWDQIVNNKDLDLPTQQELLAQFRCDEILREVMVAFDETIVPFEDKQSQAARLGEPEILGGLGAAMRSSRTKAVKAFESEASRYHKGVYQRKRAELESKADTRLKTLFQGQLNAAHKSGISEFSEAVTAAVKSGQKKGTGYDFAEIVNEEAKKAVDKFEEVARATVVDGTSWSDYKQELALYEKELAEVSARLRRDEMRRLASRVERWVQSRLGESVGLEFNALGSGRAGGGAPEKGDQPTEKKFWDRVWNVFVETVLDAERRFTDRASSFDASLEEVDVGLWRLRRKSWGVLRAKIDEEMIEGNLLLKLRENFEDKFRYDDAGVPRIWRPTDDIEGIYTRARESTLTLIPLLSKFRLDETSAPPPLDRWIGHTPSSATSADEEDLAPIGGVDEEEGKSLEEEMTIVSDAKRQELTVRFKKAADGVYVEAKRSAIGGMTQVPLYFYGLLLALGWNEIIAVLRNPAYFFLLFVCAVGAYITYQLNLWGPIIKMTEAASNQAVTEGKKRLREFLESSDTGRQAIAMSTPGGSGRGGEEHEMSRLNQQGKSAAADEDVDDL.

At 1-742 (MATNGHFASI…KRSAIGGMTQ (742 aa)) the chain is on the cytoplasmic side. The GB1/RHD3-type G domain occupies 51–300 (GFNYHLISVF…IPADGFSRYA (250 aa)). 61-68 (GSQSTGKS) serves as a coordination point for GTP. Residues 443–501 (YDFAEIVNEEAKKAVDKFEEVARATVVDGTSWSDYKQELALYEKELAEVSARLRRDEMR) adopt a coiled-coil conformation. The helical transmembrane segment at 743-763 (VPLYFYGLLLALGWNEIIAVL) threads the bilayer. Over 764-766 (RNP) the chain is Lumenal. The chain crosses the membrane as a helical span at residues 767–787 (AYFFLLFVCAVGAYITYQLNL). The Cytoplasmic portion of the chain corresponds to 788–860 (WGPIIKMTEA…AAADEDVDDL (73 aa)). The disordered stretch occupies residues 818–860 (DTGRQAIAMSTPGGSGRGGEEHEMSRLNQQGKSAAADEDVDDL).

This sequence belongs to the TRAFAC class dynamin-like GTPase superfamily. GB1/RHD3 GTPase family. RHD3 subfamily.

The protein localises to the endoplasmic reticulum membrane. Its function is as follows. Cooperates with the reticulon proteins and tubule-shaping DP1 family proteins to generate and maintain the structure of the tubular endoplasmic reticulum network. Has GTPase activity, which is required for its function in ER organization. In Aspergillus oryzae (strain ATCC 42149 / RIB 40) (Yellow koji mold), this protein is Protein sey1 (sey1).